The sequence spans 178 residues: Caveolin-1 (178 aa).

Serine 2 carries the N-acetylserine modification. Phosphoserine is present on serine 2. Residues 2–94 (SGGKYVDSEG…WKASFTTFTV (93 aa)) form a required for homooligomerization region. The Cytoplasmic segment spans residues 2–104 (SGGKYVDSEG…TKYWFYRLLS (103 aa)). At lysine 5 the chain carries N6-acetyllysine; alternate. Lysine 5 is covalently cross-linked (Glycyl lysine isopeptide (Lys-Gly) (interchain with G-Cter in ubiquitin); alternate). Position 6 is a phosphotyrosine (tyrosine 6). Residue serine 9 is modified to Phosphoserine. Tyrosine 14 is modified (phosphotyrosine; by ABL1 and INSR). The residue at position 25 (tyrosine 25) is a Phosphotyrosine. Residues lysine 26, lysine 30, lysine 39, lysine 47, and lysine 57 each participate in a glycyl lysine isopeptide (Lys-Gly) (interchain with G-Cter in ubiquitin) cross-link. The interval 82 to 94 (DGIWKASFTTFTV) is interaction with CAVIN3. An intramembrane region (helical) is located at residues 105 to 125 (TIFGIPMALIWGIYFAILSFL). The Cytoplasmic portion of the chain corresponds to 126-178 (HIWAVVPCIKSFLIEIQCISRVYSIYVHTFCDPLFEAIGKIFSNIRISTQKEI). Residues 131 to 142 (VPCIKSFLIEIQ) form an interacts with SPRY1, SPRY2, SPRY3 and SPRY4 region. S-palmitoyl cysteine attachment occurs at residues cysteine 133, cysteine 143, and cysteine 156. Residues 149 to 160 (SIYVHTFCDPLF) form an interacts with SPRY1, SPRY2, and SPRY4 region. An interacts with SPRY1, SPRY2, SPRY3 and SPRY4 region spans residues 167 to 178 (FSNIRISTQKEI).

This sequence belongs to the caveolin family. In terms of assembly, homooligomer. Interacts (via the N-terminus) with DPP4; the interaction is direct. Forms a stable heterooligomeric complex with CAV2 that targets to lipid rafts and drives caveolae formation. Interacts with BMX, BTK, CTNNB1, CDH1, GLIPR2, JUP, NOSTRIN, SNAP25 and STX1A. Interacts with SLC7A9. Interacts with TGFBR1. Interacts with CTNNB1, CDH1 and JUP. Interacts with PACSIN2; this interaction induces membrane tubulation. Interacts with CAVIN3 (via leucine-zipper domain) in a cholesterol-sensitive manner. Interacts with EHD2 in a cholesterol-dependent manner. Interacts with CAVIN1. Forms a ternary complex with UBXN6 and VCP; mediates CAV1 targeting to lysosomes for degradation. Interacts with ABCG1; this interaction regulates ABCG1-mediated cholesterol efflux. Interacts with NEU3; this interaction enhances NEU3 sialidase activity within caveola. Interacts (via C-terminus) with SPRY1, SPRY2 (via C-terminus), SPRY3, and SPRY4. Interacts with IGFBP5; this interaction allows trafficking of IGFBP5 from the plasma membrane to the nucleus. The N-terminus of both isoforms are blocked. In terms of processing, phosphorylated at Tyr-14 by ABL1 in response to oxidative stress. Post-translationally, ubiquitinated. Undergo monoubiquitination and multi- and/or polyubiquitination. Monoubiquitination of N-terminal lysines promotes integration in a ternary complex with UBXN6 and VCP which promotes oligomeric CAV1 targeting to lysosomes for degradation. Ubiquitinated by ZNRF1; leading to degradation and modulation of the TLR4-mediated immune response. As to expression, adipose tissue, lung, heart, skeletal muscle, stomach, small bowel, kidney, spleen and testis (at protein level).

The protein localises to the golgi apparatus membrane. Its subcellular location is the cell membrane. The protein resides in the membrane. It is found in the caveola. It localises to the membrane raft. The protein localises to the golgi apparatus. Its subcellular location is the trans-Golgi network. Functionally, may act as a scaffolding protein within caveolar membranes. Forms a stable heterooligomeric complex with CAV2 that targets to lipid rafts and drives caveolae formation. Mediates the recruitment of CAVIN proteins (CAVIN1/2/3/4) to the caveolae. Interacts directly with G-protein alpha subunits and can functionally regulate their activity. Involved in the costimulatory signal essential for T-cell receptor (TCR)-mediated T-cell activation. Its binding to DPP4 induces T-cell proliferation and NF-kappa-B activation in a T-cell receptor/CD3-dependent manner. Recruits CTNNB1 to caveolar membranes and may regulate CTNNB1-mediated signaling through the Wnt pathway. Negatively regulates TGFB1-mediated activation of SMAD2/3 by mediating the internalization of TGFBR1 from membrane rafts leading to its subsequent degradation. Binds 20(S)-hydroxycholesterol (20(S)-OHC). This is Caveolin-1 (Cav1) from Mus musculus (Mouse).